The following is a 129-amino-acid chain: Prefoldin subunit 4 (129 aa).

N-acetylmethionine is present on M1.

The protein belongs to the prefoldin subunit beta family. As to quaternary structure, heterohexamer of two PFD-alpha type and four PFD-beta type subunits.

Functionally, binds specifically to cytosolic chaperonin (c-CPN) and transfers target proteins to it. Binds to nascent polypeptide chain and promotes folding in an environment in which there are many competing pathways for nonnative proteins. This Saccharomyces cerevisiae (strain ATCC 204508 / S288c) (Baker's yeast) protein is Prefoldin subunit 4 (GIM3).